The chain runs to 144 residues: Peptide methionine sulfoxide reductase MsrB (144 aa).

Residues 6-128 form the MsrB domain; sequence KDELKKKLTP…NSAALRFIPK (123 aa). The Nucleophile role is filled by Cys-117.

The protein belongs to the MsrB Met sulfoxide reductase family.

It catalyses the reaction L-methionyl-[protein] + [thioredoxin]-disulfide + H2O = L-methionyl-(R)-S-oxide-[protein] + [thioredoxin]-dithiol. This chain is Peptide methionine sulfoxide reductase MsrB, found in Shouchella clausii (strain KSM-K16) (Alkalihalobacillus clausii).